Consider the following 360-residue polypeptide: MILNRLEVRGLRILRHVRMDPVSGLNLVHGVNGAGKTSLLEAIHLLSTGHSFRTRQLSPLLAPDCDAVEVVARIQSTGGGEPWPVGIRKTRDSTTARIRGENVRSLADLARLLPLQVMHPESHLLVSGGPGYRRAFLDWGCFHTDPAYHDHWRRYRHLLCQRNAALRDRSPARLLSAWDTALGEAGSALDLARATHLQTLLPYLDSLKQELPETSGLALEYRRGWNPEESLSESLAHSVQRDRSAGFTQVGPHRAELLCRLDGRPVAQVASRGQQKSVVLMLKMAQSLWLMETLGFPPVVLVDDLPAELDARHRGWLMNCLQGLGSQVFVTAIESDQVPLSGWDSWQMFHVEHGTLRVGD.

30-37 (GVNGAGKT) is a binding site for ATP.

Belongs to the RecF family.

The protein localises to the cytoplasm. The RecF protein is involved in DNA metabolism; it is required for DNA replication and normal SOS inducibility. RecF binds preferentially to single-stranded, linear DNA. It also seems to bind ATP. The sequence is that of DNA replication and repair protein RecF from Thioalkalivibrio sulfidiphilus (strain HL-EbGR7).